The primary structure comprises 278 residues: Energy-coupling factor transporter ATP-binding protein EcfA1 (278 aa).

In terms of domain architecture, ABC transporter spans 5–239 (LLLESVSYQY…QDKLEAAGID (235 aa)). 39–46 (GPNGSGKS) serves as a coordination point for ATP.

Belongs to the ABC transporter superfamily. Energy-coupling factor EcfA family. In terms of assembly, forms a stable energy-coupling factor (ECF) transporter complex composed of 2 membrane-embedded substrate-binding proteins (S component), 2 ATP-binding proteins (A component) and 2 transmembrane proteins (T component).

It is found in the cell membrane. Its function is as follows. ATP-binding (A) component of a common energy-coupling factor (ECF) ABC-transporter complex. Unlike classic ABC transporters this ECF transporter provides the energy necessary to transport a number of different substrates. The polypeptide is Energy-coupling factor transporter ATP-binding protein EcfA1 (Halalkalibacterium halodurans (strain ATCC BAA-125 / DSM 18197 / FERM 7344 / JCM 9153 / C-125) (Bacillus halodurans)).